Reading from the N-terminus, the 851-residue chain is M-phase phosphoprotein 8 (851 aa).

The segment at 21–54 is disordered; that stretch reads NIGRSPEVEGGGAAGEEKDAATKGTVAVGDSEED. A phosphoserine mark is found at serine 51, serine 85, and serine 136. Positions 59–118 constitute a Chromo domain; sequence FEVERILDMKCEGGKNLYKVRWKGYTSDDDTWEPEVHLEDCKEVLLEFRKKVAENKAKAV. The tract at residues 80-87 is histone H3K9me3 binding; sequence WKGYTSDD. The interval 133–174 is disordered; the sequence is EADSDIDQQGDTKEDTSPRKKKKKIKYKEDKSPDDLRKKRAK. Threonine 144 carries the phosphothreonine modification. Serine 149 and serine 164 each carry phosphoserine; by CDK1. The span at 159-169 shows a compositional bias: basic and acidic residues; it reads YKEDKSPDDLR. A phosphoserine mark is found at serine 188, serine 263, serine 267, and serine 274. The tract at residues 240–302 is disordered; that stretch reads REDVKDNRKT…KTGQDTVQES (63 aa). Over residues 269 to 278 the composition is skewed to acidic residues; that stretch reads TLEDESEDFL. Residues 279–295 show a composition bias toward basic and acidic residues; that stretch reads SDNKEKQNVRTAKDKTG. Serine 313 carries the phosphoserine modification. The segment at 315 to 428 is disordered; sequence EEAGTRVRRK…DKEEKARKEP (114 aa). The segment covering 329–364 has biased composition (basic and acidic residues); sequence RKFEEPKEIKKLENTNNFLERKMIPKKQRNQDKGRS. A Phosphothreonine; by CDK1 modification is found at threonine 379. 2 positions are modified to phosphoserine: serine 386 and serine 394. Residues 401–428 are compositionally biased toward basic and acidic residues; the sequence is EKERKNEPKEKYQKRYDFDKEEKARKEP. Threonine 447 bears the Phosphothreonine mark. 4 ANK repeats span residues 591-620, 624-653, 657-686, and 690-719; these read TGMT…KVNG, NGTT…FVNV, NGET…DCNI, and HQNS…TLSR.

In terms of assembly, homodimer. Interacts (via chromo domain) with histone H3K9me3. Has the highest affinity for H3K9me3, and lesser affinity for H3K9me2 and H3K9me1. Component of the HUSH complex; at least composed of TASOR, PPHLN1 and MPHOSPH8. Interacts with DNMT3, EHMT1 and SETDB1. Interacts with MORC2; the interaction associateS MORC2 with the HUSH complex which recruits MORC2 to heterochromatic loci. Interacts with ZNF638; leading to recruitment of the HUSH complex to unintegrated retroviral DNA. Interacts with TASOR. Phosphorylated in M (mitotic) phase. Phosphorylation by CDK1 promotes dissociation from chromatin.

It is found in the nucleus. It localises to the chromosome. Its function is as follows. Heterochromatin component that specifically recognizes and binds methylated 'Lys-9' of histone H3 (H3K9me) and promotes recruitment of proteins that mediate epigenetic repression. Mediates recruitment of the HUSH complex to H3K9me3 sites: the HUSH complex is recruited to genomic loci rich in H3K9me3 and is required to maintain transcriptional silencing by promoting recruitment of SETDB1, a histone methyltransferase that mediates further deposition of H3K9me3, as well as MORC2. Binds H3K9me and promotes DNA methylation by recruiting DNMT3A to target CpG sites; these can be situated within the coding region of the gene. Mediates down-regulation of CDH1 expression. Also represses L1 retrotransposons in collaboration with MORC2 and, probably, SETDB1, the silencing is dependent of repressive epigenetic modifications, such as H3K9me3 mark. Silencing events often occur within introns of transcriptionally active genes, and lead to the down-regulation of host gene expression. The HUSH complex is also involved in the silencing of unintegrated retroviral DNA by being recruited by ZNF638: some part of the retroviral DNA formed immediately after infection remains unintegrated in the host genome and is transcriptionally repressed. This Rattus norvegicus (Rat) protein is M-phase phosphoprotein 8.